Reading from the N-terminus, the 301-residue chain is Probable alpha-L-glutamate ligase 2 (301 aa).

The region spanning 104–287 is the ATP-grasp domain; sequence LQLLSRKSIG…VADKIIQFIE (184 aa). ATP is bound by residues Lys141, 178–179, Asp187, and 211–213; these read EY and RSN. Residues Asp248, Glu260, and Asn262 each coordinate Mg(2+). Mn(2+) contacts are provided by Asp248, Glu260, and Asn262.

The protein belongs to the RimK family. It depends on Mg(2+) as a cofactor. Mn(2+) serves as cofactor.

In Shewanella denitrificans (strain OS217 / ATCC BAA-1090 / DSM 15013), this protein is Probable alpha-L-glutamate ligase 2.